We begin with the raw amino-acid sequence, 132 residues long: Antimicrobial protein Ace-AMP1 (132 aa).

The signal sequence occupies residues 1–27 (MVRVVSLLAASTFILLIMIISSPYANS). 4 cysteine pairs are disulfide-bonded: C31–C76, C41–C54, C55–C100, and C74–C116.

This sequence belongs to the plant LTP family. Highly divergent. In terms of assembly, monomer.

Its function is as follows. Antifungal and antibacterial activity against the Gram-positive bacteria B.megaterium and S.lutea. This chain is Antimicrobial protein Ace-AMP1, found in Allium cepa (Onion).